The primary structure comprises 518 residues: Subtilisin-like protease 1 (518 aa).

The first 19 residues, 1 to 19 (MGVFRFISISLAAVSAANA), serve as a signal peptide directing secretion. Positions 20–116 (AQILSMPHAQ…VEPDTIISVH (97 aa)) are excised as a propeptide. Residues 34-115 (SYIVMMKDDT…FVEPDTIISV (82 aa)) enclose the Inhibitor I9 domain. The 275-residue stretch at 126-400 (SWGLARISNP…NVLINNGGAK (275 aa)) folds into the Peptidase S8 domain. Active-site charge relay system residues include Asp158 and His190. The disordered stretch occupies residues 175–198 (GSNQVNDGDDRDGSGHGTHTSGTM). Asn233 and Asn251 each carry an N-linked (GlcNAc...) asparagine glycan. Residues 282–294 (NDNQDAQSSSPAS) show a composition bias toward polar residues. Residues 282–312 (NDNQDAQSSSPASEPSVCTVGSSAEDDSRSS) form a disordered region. The Charge relay system role is filled by Ser345. A compositionally biased stretch (polar residues) spans 378 to 394 (TSSITDAGPGTPTNVLI). The segment at 378–496 (TSSITDAGPG…PYPGGDNFDF (119 aa)) is disordered. Pro residues-rich tracts occupy residues 405–470 (NPNP…PGEP) and 478–487 (APAPQHPHTP).

The protein belongs to the peptidase S8 family.

It localises to the secreted. Secreted subtilisin-like serine protease with keratinolytic activity that contributes to pathogenicity. This is Subtilisin-like protease 1 (SUB1) from Trichophyton verrucosum (strain HKI 0517).